Reading from the N-terminus, the 535-residue chain is Peptide chain release factor 3 (535 aa).

The region spanning 8–277 (KRRRTFAIIS…TLVDLAPPPG (270 aa)) is the tr-type G domain. Residues 17–24 (SHPDAGKT), 85–89 (DTPGH), and 139–142 (NKLD) each bind GTP.

It belongs to the TRAFAC class translation factor GTPase superfamily. Classic translation factor GTPase family. PrfC subfamily.

The protein localises to the cytoplasm. Functionally, increases the formation of ribosomal termination complexes and stimulates activities of RF-1 and RF-2. It binds guanine nucleotides and has strong preference for UGA stop codons. It may interact directly with the ribosome. The stimulation of RF-1 and RF-2 is significantly reduced by GTP and GDP, but not by GMP. The protein is Peptide chain release factor 3 of Nitrosomonas eutropha (strain DSM 101675 / C91 / Nm57).